A 580-amino-acid polypeptide reads, in one-letter code: Alpha-thujene synthase TPS3, chloroplastic (580 aa).

A chloroplast-targeting transit peptide spans 1–26; the sequence is MALQLLTPSFSFQHSPSPHRLTTLRY. (2E)-geranyl diphosphate-binding residues include R296, D333, D337, R473, and D476. 2 residues coordinate Mg(2+): D333 and D337. The DDXXD motif motif lies at 333-337; it reads DDVYD. Mg(2+) is bound by residues D476, T480, and E484.

Belongs to the terpene synthase family. Tpsb subfamily. Monomer. The cofactor is Mg(2+). It depends on Mn(2+) as a cofactor. Mostly expressed in developing and mature fruits, and, to a lower extent, in male leaves. Barely detectable in female leaves and shoots.

The protein resides in the plastid. Its subcellular location is the chloroplast. It carries out the reaction (2E)-geranyl diphosphate = alpha-thujene + diphosphate. It catalyses the reaction (2E)-geranyl diphosphate = (1R,5R)-sabinene + diphosphate. The protein operates within secondary metabolite biosynthesis; terpenoid biosynthesis. In terms of biological role, monoterpene synthase (TPS) involved in the biosynthesis of monoterpene natural products used by traditional Chinese medicine to treat headache, inflammation and intoxication. Catalyzes the conversion of (2E)-geranyl diphosphate (GPP) into alpha-thujene and (1R,5R)-sabinene. This chain is Alpha-thujene synthase TPS3, chloroplastic, found in Litsea cubeba (Aromatic litsea).